Reading from the N-terminus, the 131-residue chain is CLAVATA3/ESR (CLE)-related protein ESR1 (131 aa).

An N-terminal signal peptide occupies residues 1–26; sequence MASRMGMVAIVSLFVCALAASTSVNA. Residues 49 to 131 are disordered; sequence RQQQQGGFIG…IGPPPLSDRY (83 aa). Pro81 and Pro84 each carry hydroxyproline. Residue Pro84 is glycosylated (O-linked (Ara...) hydroxyproline).

The protein belongs to the CLV3/ESR signal peptide family. In terms of processing, the O-glycosylation (arabinosylation) of the hydroxyproline Pro-84 enhances binding affinity of the ESR1p peptide for its receptor. Seed endosperm.

It localises to the secreted. The protein localises to the extracellular space. Its function is as follows. Extracellular signal peptide that regulates cell fate. This is CLAVATA3/ESR (CLE)-related protein ESR1 from Zea mays (Maize).